The chain runs to 150 residues: Regulatory protein RecX (150 aa).

Belongs to the RecX family.

It is found in the cytoplasm. Functionally, modulates RecA activity. This Legionella pneumophila (strain Corby) protein is Regulatory protein RecX.